A 250-amino-acid polypeptide reads, in one-letter code: Pimeloyl-[acyl-carrier protein] methyl ester esterase (250 aa).

Substrate is bound by residues tryptophan 12, 71–72 (SL), and 138–142 (FVALQ). Serine 71 serves as the catalytic Nucleophile. Catalysis depends on residues aspartate 202 and histidine 230. Histidine 230 lines the substrate pocket.

It belongs to the AB hydrolase superfamily. Carboxylesterase BioH family. In terms of assembly, monomer.

The protein resides in the cytoplasm. The catalysed reaction is 6-carboxyhexanoyl-[ACP] methyl ester + H2O = 6-carboxyhexanoyl-[ACP] + methanol + H(+). Its pathway is cofactor biosynthesis; biotin biosynthesis. In terms of biological role, the physiological role of BioH is to remove the methyl group introduced by BioC when the pimeloyl moiety is complete. It allows to synthesize pimeloyl-ACP via the fatty acid synthetic pathway through the hydrolysis of the ester bonds of pimeloyl-ACP esters. The chain is Pimeloyl-[acyl-carrier protein] methyl ester esterase from Aromatoleum aromaticum (strain DSM 19018 / LMG 30748 / EbN1) (Azoarcus sp. (strain EbN1)).